We begin with the raw amino-acid sequence, 104 residues long: Large ribosomal subunit protein bL21 (104 aa).

It belongs to the bacterial ribosomal protein bL21 family. In terms of assembly, part of the 50S ribosomal subunit. Contacts protein L20.

In terms of biological role, this protein binds to 23S rRNA in the presence of protein L20. The protein is Large ribosomal subunit protein bL21 of Pseudomonas putida (strain W619).